Consider the following 137-residue polypeptide: Small ribosomal subunit protein uS12 (137 aa).

D102 carries the post-translational modification 3-methylthioaspartic acid.

It belongs to the universal ribosomal protein uS12 family. Part of the 30S ribosomal subunit. Contacts proteins S8 and S17. May interact with IF1 in the 30S initiation complex.

In terms of biological role, with S4 and S5 plays an important role in translational accuracy. Interacts with and stabilizes bases of the 16S rRNA that are involved in tRNA selection in the A site and with the mRNA backbone. Located at the interface of the 30S and 50S subunits, it traverses the body of the 30S subunit contacting proteins on the other side and probably holding the rRNA structure together. The combined cluster of proteins S8, S12 and S17 appears to hold together the shoulder and platform of the 30S subunit. The protein is Small ribosomal subunit protein uS12 of Mesoplasma florum (strain ATCC 33453 / NBRC 100688 / NCTC 11704 / L1) (Acholeplasma florum).